The sequence spans 891 residues: von Willebrand factor A domain-containing protein 7 (891 aa).

Residues 1–28 (MLPTEVPQSHPGPSALLLLQLLLPPTSA) form the signal peptide. N-linked (GlcNAc...) asparagine glycosylation occurs at N55. Residues 237–272 (PKPPGKCSHGGHFDRSSSQPPRGGINKDSTSPGFSP) are disordered. One can recognise a VWFA domain in the interval 313 to 506 (ASSLSFVLDT…SMAALVTLPL (194 aa)).

In terms of tissue distribution, expressed at low level in different cell lines.

The protein localises to the secreted. The protein is von Willebrand factor A domain-containing protein 7 (VWA7) of Homo sapiens (Human).